Consider the following 213-residue polypeptide: Histone H1 (213 aa).

A compositionally biased stretch (low complexity) spans 1–25; it reads MAAATASAAATPAKKAAPKKPAAAP. 2 disordered regions span residues 1-30 and 81-213; these read MAAATASAAATPAKKAAPKKPAAAPEHPSY and GEFV…AKSS. The 72-residue stretch at 26–97 folds into the H15 domain; sequence EHPSYKEMLT…GPSGTVKLAK (72 aa). 4 stretches are compositionally biased toward low complexity: residues 102-113, 123-137, 157-176, and 203-213; these read AAAPKKPAAKKA, KKAAAPKKAAAPKSA, KKAAAPKKVAAPVEKPAPVK, and PKKAATPAKSS.

It belongs to the histone H1/H5 family.

The protein resides in the nucleus. It localises to the chromosome. Functionally, could act as an H1-type linker histone. The chain is Histone H1 from Ascobolus immersus.